A 536-amino-acid polypeptide reads, in one-letter code: MGALSEIFTAGYVALAGITGFFLVFLGFLVVISDYIDGWRSRRALGDIPIVDEGSNLSPILRWNSQPYDAEAEFTRAYYKYSKNGKPFAARIQHGGYAIVLPPSACRKVRSIGHEQLSFLDALAEFADLSLHMDVTSRRVIEATHACNNETTIKNFQERLALECGKHLAPVFDPPQEQESTELKTLKSVFAAISAVATALILGPDCPEALVSEVTAGATAYNEVMIQCRILRAQYPKILKPLVWRFSRTARELRAILSRLKARLVPEIKRRIAYLEAHSTSENQAESAGSFSLLDILIQTSFKNRHLPSTPVENDKWADLLCQQALLYHFKLSRAPGTSVTFMLYRVMNHPEYATMLRDEMIAALKPSGGNWTADILQRAPKLESFNKETFRMHDISNFVGLRVAMRPVDLRSVSPPLHLKPGTMIMTPSRTVHYDAEHYVDPLTFNGLRFYDATSNTCTPRVFTTSPTYLPFSHGTGSCPARNFATQIARMLFIRLLMGYEFELANEEMPAYGLMDGTAYFPNPEVRMRVRVRGK.

The helical transmembrane segment at 12 to 32 threads the bilayer; that stretch reads YVALAGITGFFLVFLGFLVVI. Residues asparagine 149 and asparagine 371 are each glycosylated (N-linked (GlcNAc...) asparagine). Cysteine 480 serves as a coordination point for heme.

The protein belongs to the cytochrome P450 family. Requires heme as cofactor.

It is found in the membrane. It catalyses the reaction 2 7-demethylsiderin + NADPH + O2 = desertorin A + NADP(+) + 2 H2O. It functions in the pathway secondary metabolite biosynthesis. Functionally, non-reducing polyketide synthase; part of the gene cluster that mediates the biosynthesis of the bicoumarin desertorin. The non-reducing polyketide synthase desS first catalyzes the formation of the pentaketidic 4,7-dihydroxy-5-methylcoumarin from acetyl coenzyme A and 4 malonyl coenzyme A molecules. Further O-methylation by desB leads to the formation of 7-demethylsiderin. Then, an oxidative phenol coupling catalyzed by the cytochrome P450 monooxygenase desC forms the 6,8'-dimer M-desertorin A via dimerization the monomeric precursor, 7-demethylsiderin. M-desertorin A is further converted to M-desertorin C. The polypeptide is Bicoumarin synthase desC (Aspergillus desertorum (Emericella desertorum)).